The sequence spans 355 residues: 3-dehydroquinate synthase (355 aa).

NAD(+) contacts are provided by residues 98-102 (GVIGD), 122-123 (TT), Lys135, Lys144, and 162-165 (TLNT). 3 residues coordinate Zn(2+): Glu177, His240, and His257.

Belongs to the sugar phosphate cyclases superfamily. Dehydroquinate synthase family. Requires Co(2+) as cofactor. Zn(2+) is required as a cofactor. The cofactor is NAD(+).

It is found in the cytoplasm. The enzyme catalyses 7-phospho-2-dehydro-3-deoxy-D-arabino-heptonate = 3-dehydroquinate + phosphate. It participates in metabolic intermediate biosynthesis; chorismate biosynthesis; chorismate from D-erythrose 4-phosphate and phosphoenolpyruvate: step 2/7. Its function is as follows. Catalyzes the conversion of 3-deoxy-D-arabino-heptulosonate 7-phosphate (DAHP) to dehydroquinate (DHQ). This Dictyoglomus thermophilum (strain ATCC 35947 / DSM 3960 / H-6-12) protein is 3-dehydroquinate synthase.